The chain runs to 477 residues: V-type ATP synthase beta chain (477 aa).

It belongs to the ATPase alpha/beta chains family.

Produces ATP from ADP in the presence of a proton gradient across the membrane. The V-type beta chain is a regulatory subunit. In Anaeromyxobacter sp. (strain K), this protein is V-type ATP synthase beta chain.